The sequence spans 74 residues: Small ribosomal subunit protein bS18 (74 aa).

It belongs to the bacterial ribosomal protein bS18 family. As to quaternary structure, part of the 30S ribosomal subunit. Forms a tight heterodimer with protein bS6.

In terms of biological role, binds as a heterodimer with protein bS6 to the central domain of the 16S rRNA, where it helps stabilize the platform of the 30S subunit. The polypeptide is Small ribosomal subunit protein bS18 (Novosphingobium aromaticivorans (strain ATCC 700278 / DSM 12444 / CCUG 56034 / CIP 105152 / NBRC 16084 / F199)).